We begin with the raw amino-acid sequence, 230 residues long: Large ribosomal subunit protein uL1 (230 aa).

Belongs to the universal ribosomal protein uL1 family. In terms of assembly, part of the 50S ribosomal subunit.

Its function is as follows. Binds directly to 23S rRNA. The L1 stalk is quite mobile in the ribosome, and is involved in E site tRNA release. In terms of biological role, protein L1 is also a translational repressor protein, it controls the translation of the L11 operon by binding to its mRNA. The polypeptide is Large ribosomal subunit protein uL1 (Lactobacillus acidophilus (strain ATCC 700396 / NCK56 / N2 / NCFM)).